The chain runs to 582 residues: Hemagglutinin-neuraminidase (582 aa).

The Intravirion segment spans residues 1–34 (MEPSKLFTMSDNATFAPGPVVNAADKKTFRTCFR). The helical transmembrane segment at 35-55 (ILVLSVQAVTLILVIVTLGEL) threads the bilayer. Residues 56-582 (VRMINDQGLS…LPVLTRLTIT (527 aa)) are Virion surface-facing. Disulfide bonds link cysteine 178–cysteine 202, cysteine 192–cysteine 253, and cysteine 244–cysteine 257. N-linked (GlcNAc...) asparagine; by host glycosylation is found at asparagine 284 and asparagine 329. Disulfide bonds link cysteine 350–cysteine 471, cysteine 382–cysteine 392, and cysteine 465–cysteine 475. N-linked (GlcNAc...) asparagine; by host glycosylation is found at asparagine 400 and asparagine 448. Residue asparagine 507 is glycosylated (N-linked (GlcNAc...) asparagine; by host). A disulfide bridge connects residues cysteine 545 and cysteine 556.

It belongs to the paramyxoviruses hemagglutinin-neuraminidase family. In terms of assembly, homotetramer; composed of disulfide-linked homodimers. Interacts with F protein trimer.

It is found in the virion membrane. The protein resides in the host cell membrane. The catalysed reaction is Hydrolysis of alpha-(2-&gt;3)-, alpha-(2-&gt;6)-, alpha-(2-&gt;8)- glycosidic linkages of terminal sialic acid residues in oligosaccharides, glycoproteins, glycolipids, colominic acid and synthetic substrates.. Attaches the virus to alpha-2,3-linked sialic acid-containing cell receptors and thereby initiating infection. Binding of HN protein to the receptor induces a conformational change that allows the F protein to trigger virion/cell membranes fusion. Binds to the glycan motifs sialyl Lewis (SLe) and GM2 ganglioside (GM2-glycan). Its function is as follows. Neuraminidase activity ensures the efficient spread of the virus by dissociating the mature virions from the neuraminic acid containing glycoproteins. The polypeptide is Hemagglutinin-neuraminidase (Mumps orthorubulavirus (MuV)).